Reading from the N-terminus, the 378-residue chain is Fetuin-B (378 aa).

An N-terminal signal peptide occupies residues 1 to 18 (MGVLRLLVLCTLAACCVA). 2 consecutive Cystatin fetuin-B-type domains span residues 28–141 (NAPF…YNCT) and 152–261 (SMCP…VSCE). The N-linked (GlcNAc...) asparagine glycan is linked to N40. 5 disulfides stabilise this stretch: C96-C107, C120-C140, C154-C157, C217-C224, and C237-C260. An N-linked (GlcNAc...) asparagine glycan is attached at N139. Disordered stretches follow at residues 266–338 (QDQV…PQGD) and 357–378 (LPFP…QRTP). A compositionally biased stretch (polar residues) spans 286–297 (QKNTAPTSSPSI). T289 and T292 each carry an O-linked (GalNAc...) threonine glycan. At S316 the chain carries Phosphoserine. A compositionally biased stretch (basic and acidic residues) spans 362-378 (KEQRSPECPGPEKQRTP).

The protein belongs to the fetuin family. Liver.

It localises to the secreted. Functionally, protease inhibitor required for egg fertilization. Required to prevent premature zona pellucida hardening before fertilization, probably by inhibiting the protease activity of ASTL, a protease that mediates the cleavage of ZP2 and triggers zona pellucida hardening. This Rattus norvegicus (Rat) protein is Fetuin-B (Fetub).